The sequence spans 424 residues: Histidine--tRNA ligase (424 aa).

The protein belongs to the class-II aminoacyl-tRNA synthetase family. In terms of assembly, homodimer.

Its subcellular location is the cytoplasm. It carries out the reaction tRNA(His) + L-histidine + ATP = L-histidyl-tRNA(His) + AMP + diphosphate + H(+). This is Histidine--tRNA ligase from Bacillus velezensis (strain DSM 23117 / BGSC 10A6 / LMG 26770 / FZB42) (Bacillus amyloliquefaciens subsp. plantarum).